Consider the following 464-residue polypeptide: Glutamyl-tRNA reductase (464 aa).

Substrate is bound by residues 47-50 (TCNR), Ser145, 150-152 (EPQ), and Gln156. Residue Cys48 is the Nucleophile of the active site. 225–230 (AAGEMN) provides a ligand contact to NADP(+).

Belongs to the glutamyl-tRNA reductase family. Homodimer.

The catalysed reaction is (S)-4-amino-5-oxopentanoate + tRNA(Glu) + NADP(+) = L-glutamyl-tRNA(Glu) + NADPH + H(+). The protein operates within porphyrin-containing compound metabolism; protoporphyrin-IX biosynthesis; 5-aminolevulinate from L-glutamyl-tRNA(Glu): step 1/2. Its function is as follows. Catalyzes the NADPH-dependent reduction of glutamyl-tRNA(Glu) to glutamate 1-semialdehyde (GSA). The protein is Glutamyl-tRNA reductase of Psychrobacter cryohalolentis (strain ATCC BAA-1226 / DSM 17306 / VKM B-2378 / K5).